The primary structure comprises 559 residues: CRISPR-associated exonuclease Cas4/endonuclease Cas1 fusion (559 aa).

The interval 1-198 is CRISPR-associated exonuclease Cas4; that stretch reads MAETDGSIPL…RCSLVGICLP (198 aa). Cys-22 serves as a coordination point for [4Fe-4S] cluster. Positions 87 and 100 each coordinate Mn(2+). Cys-187, Cys-190, and Cys-196 together coordinate [4Fe-4S] cluster. Positions 224–559 are CRISPR-associated endonuclease Cas1; that stretch reads LYVQSPKAYV…IPAYPNFVTR (336 aa). Mn(2+)-binding residues include Glu-380, His-451, and Glu-466.

This sequence in the N-terminal section; belongs to the CRISPR-associated exonuclease Cas4 family. The protein in the C-terminal section; belongs to the CRISPR-associated endonuclease Cas1 family. In terms of assembly, homodimer, forms a heterotetramer with a Cas2 homodimer. The cofactor is [4Fe-4S] cluster. Mg(2+) is required as a cofactor. It depends on Mn(2+) as a cofactor.

The enzyme catalyses exonucleolytic cleavage in the 5'- to 3'-direction to yield nucleoside 3'-phosphates.. In terms of biological role, CRISPR (clustered regularly interspaced short palindromic repeat), is an adaptive immune system that provides protection against mobile genetic elements (viruses, transposable elements and conjugative plasmids). CRISPR clusters contain spacers, sequences complementary to antecedent mobile elements, and target invading nucleic acids. CRISPR clusters are transcribed and processed into CRISPR RNA (crRNA). The Cas4 region acts as a ssDNA exonuclease, while the Cas1 region acts as a dsDNA endonuclease. Involved in the integration of spacer DNA into the CRISPR cassette. This is CRISPR-associated exonuclease Cas4/endonuclease Cas1 fusion (cas4-cas1) from Geobacter sulfurreducens (strain ATCC 51573 / DSM 12127 / PCA).